A 534-amino-acid chain; its full sequence is Flavonoid-6-hydroxylase (534 aa).

Residues 3-23 form a helical membrane-spanning segment; the sequence is FISFVYTLIAFSSLLYFYLIW. C467 provides a ligand contact to heme.

Belongs to the cytochrome P450 family. The cofactor is heme. Expressed in leaves.

It is found in the membrane. It catalyses the reaction genkwanin + reduced [NADPH--hemoprotein reductase] + O2 = scutellarein 7-methyl ether + oxidized [NADPH--hemoprotein reductase] + H2O. The enzyme catalyses (2S)-sakuranetin + reduced [NADPH--hemoprotein reductase] + O2 = (2S)-7-methylcarthamidin + oxidized [NADPH--hemoprotein reductase] + H2O + H(+). It carries out the reaction apigenin 4',7-dimethyl ether + reduced [NADPH--hemoprotein reductase] + O2 = ladanein + oxidized [NADPH--hemoprotein reductase] + H2O + H(+). The catalysed reaction is (2S)-naringenin 4',7-dimethyl ether + reduced [NADPH--hemoprotein reductase] + O2 = (2S)-carthamidin-4',7-dimethyl ether + oxidized [NADPH--hemoprotein reductase] + H2O + H(+). It functions in the pathway flavonoid metabolism. Its function is as follows. Hydroxylase involved in the biosynthesis of polymethoxylated flavonoids natural products such as nevadensin and salvigenin, aroma compounds which contribute to the flavor of sweet basil, and exhibit pharmacological activities such as anti-allergic, anti-oxidant, antibacterial, anti-proliferative, and anti-inflammatory effects. Catalyzes the 6-hydroxylation of 7-O-methylated precursors such as the conversion of genkwanin (GENK) to scutellarein-7-methyl ether (SCU7Me). Can also use, with a lower efficiency, apigenin-7,4'-dimethyl ether (AdM), naringenin-7-methyl ether (SAK) and naringenin-7,4'-dimethyl ether (NdM) as substrates. This Ocimum basilicum (Sweet basil) protein is Flavonoid-6-hydroxylase.